Reading from the N-terminus, the 204-residue chain is 8-oxoguanine DNA glycosylase/AP lyase (204 aa).

Residues Lys-129 and Asp-147 contribute to the active site.

The protein belongs to the type-2 OGG1 family.

It carries out the reaction 2'-deoxyribonucleotide-(2'-deoxyribose 5'-phosphate)-2'-deoxyribonucleotide-DNA = a 3'-end 2'-deoxyribonucleotide-(2,3-dehydro-2,3-deoxyribose 5'-phosphate)-DNA + a 5'-end 5'-phospho-2'-deoxyribonucleoside-DNA + H(+). Catalyzes the excision of an oxidatively damaged form of guanine (7,8-dihydro-8-oxoguanine = 8-oxoG) from DNA. Also cleaves the DNA backbone at apurinic/apyrimidinic sites (AP sites). Prefers oligomers containing 8-oxoG:C, 8-oxoG:T and 8-oxoG:G base pairs, and is less effective on oligomers containing 8-oxoG:A mispairs. This chain is 8-oxoguanine DNA glycosylase/AP lyase, found in Thermoplasma volcanium (strain ATCC 51530 / DSM 4299 / JCM 9571 / NBRC 15438 / GSS1).